We begin with the raw amino-acid sequence, 373 residues long: GTP cyclohydrolase 1 type 2 homolog (373 aa).

Residues His68, His69, Asp107, His333, and Glu336 each coordinate a divalent metal cation.

This sequence belongs to the GTP cyclohydrolase I type 2/NIF3 family. Homohexamer.

This chain is GTP cyclohydrolase 1 type 2 homolog (yqfO), found in Bacillus subtilis (strain 168).